The sequence spans 209 residues: Large ribosomal subunit protein uL3 (209 aa).

The segment at 141-163 (RAVGSMGASSDPSRTFKNKRMPG) is disordered.

Belongs to the universal ribosomal protein uL3 family. In terms of assembly, part of the 50S ribosomal subunit. Forms a cluster with proteins L14 and L19.

One of the primary rRNA binding proteins, it binds directly near the 3'-end of the 23S rRNA, where it nucleates assembly of the 50S subunit. In Clostridium botulinum (strain Kyoto / Type A2), this protein is Large ribosomal subunit protein uL3.